A 484-amino-acid chain; its full sequence is tRNA sulfurtransferase (484 aa).

Residues 63 to 167 (EAFAERLACI…KESLYLVSKR (105 aa)) enclose the THUMP domain. ATP is bound by residues 185 to 186 (LI), Lys267, Gly289, and Gln298. A disulfide bridge connects residues Cys346 and Cys458. One can recognise a Rhodanese domain in the interval 406 to 484 (INSGEVIIDV…GYDNVKVYRP (79 aa)). Cys458 functions as the Cysteine persulfide intermediate in the catalytic mechanism.

Belongs to the ThiI family.

It localises to the cytoplasm. It catalyses the reaction [ThiI sulfur-carrier protein]-S-sulfanyl-L-cysteine + a uridine in tRNA + 2 reduced [2Fe-2S]-[ferredoxin] + ATP + H(+) = [ThiI sulfur-carrier protein]-L-cysteine + a 4-thiouridine in tRNA + 2 oxidized [2Fe-2S]-[ferredoxin] + AMP + diphosphate. It carries out the reaction [ThiS sulfur-carrier protein]-C-terminal Gly-Gly-AMP + S-sulfanyl-L-cysteinyl-[cysteine desulfurase] + AH2 = [ThiS sulfur-carrier protein]-C-terminal-Gly-aminoethanethioate + L-cysteinyl-[cysteine desulfurase] + A + AMP + 2 H(+). Its pathway is cofactor biosynthesis; thiamine diphosphate biosynthesis. Its function is as follows. Catalyzes the ATP-dependent transfer of a sulfur to tRNA to produce 4-thiouridine in position 8 of tRNAs, which functions as a near-UV photosensor. Also catalyzes the transfer of sulfur to the sulfur carrier protein ThiS, forming ThiS-thiocarboxylate. This is a step in the synthesis of thiazole, in the thiamine biosynthesis pathway. The sulfur is donated as persulfide by IscS. The chain is tRNA sulfurtransferase from Shewanella woodyi (strain ATCC 51908 / MS32).